Here is a 161-residue protein sequence, read N- to C-terminus: 2-C-methyl-D-erythritol 2,4-cyclodiphosphate synthase (161 aa).

A divalent metal cation-binding residues include Asp11 and His13. 4-CDP-2-C-methyl-D-erythritol 2-phosphate-binding positions include 11-13 and 37-38; these read DIH and HS. An a divalent metal cation-binding site is contributed by His45. 4-CDP-2-C-methyl-D-erythritol 2-phosphate is bound by residues 59-61, 135-138, and Arg145; these read DIG and TTNE.

This sequence belongs to the IspF family. Homotrimer. A divalent metal cation is required as a cofactor.

The enzyme catalyses 4-CDP-2-C-methyl-D-erythritol 2-phosphate = 2-C-methyl-D-erythritol 2,4-cyclic diphosphate + CMP. It participates in isoprenoid biosynthesis; isopentenyl diphosphate biosynthesis via DXP pathway; isopentenyl diphosphate from 1-deoxy-D-xylulose 5-phosphate: step 4/6. Involved in the biosynthesis of isopentenyl diphosphate (IPP) and dimethylallyl diphosphate (DMAPP), two major building blocks of isoprenoid compounds. Catalyzes the conversion of 4-diphosphocytidyl-2-C-methyl-D-erythritol 2-phosphate (CDP-ME2P) to 2-C-methyl-D-erythritol 2,4-cyclodiphosphate (ME-CPP) with a corresponding release of cytidine 5-monophosphate (CMP). In Thermosynechococcus vestitus (strain NIES-2133 / IAM M-273 / BP-1), this protein is 2-C-methyl-D-erythritol 2,4-cyclodiphosphate synthase.